A 325-amino-acid chain; its full sequence is Glutarate 2-hydroxylase (325 aa).

Positions 160, 162, and 292 each coordinate Fe cation.

Belongs to the glutarate hydroxylase family. As to quaternary structure, homotetramer. The cofactor is Fe(2+).

It catalyses the reaction glutarate + 2-oxoglutarate + O2 = (S)-2-hydroxyglutarate + succinate + CO2. The protein operates within amino-acid degradation. Functionally, acts as an alpha-ketoglutarate-dependent dioxygenase catalyzing hydroxylation of glutarate (GA) to L-2-hydroxyglutarate (L2HG). Functions in a L-lysine degradation pathway that proceeds via cadaverine, glutarate and L-2-hydroxyglutarate. The chain is Glutarate 2-hydroxylase from Escherichia coli O127:H6 (strain E2348/69 / EPEC).